The primary structure comprises 428 residues: Nematode resistance protein-like HSPRO1 (428 aa).

Interacts with SNF4.

It localises to the cytoplasm. Its function is as follows. Positive regulator of basal resistance. The protein is Nematode resistance protein-like HSPRO1 (HSPRO1) of Arabidopsis thaliana (Mouse-ear cress).